Here is a 203-residue protein sequence, read N- to C-terminus: Endo-type membrane-bound lytic murein transglycosylase A (203 aa).

The signal sequence occupies residues 1 to 15; the sequence is MKLRWFAFLVVILAG. Cysteine 16 carries the N-palmitoyl cysteine lipid modification. Cysteine 16 is lipidated: S-diacylglycerol cysteine.

Belongs to the transglycosylase Slt family.

It localises to the cell outer membrane. It carries out the reaction Endolytic cleavage of the (1-&gt;4)-beta-glycosidic linkage between N-acetylmuramic acid (MurNAc) and N-acetylglucosamine (GlcNAc) residues in peptidoglycan with concomitant formation of a 1,6-anhydrobond in the MurNAc residue.. Murein-degrading enzyme. May play a role in recycling of muropeptides during cell elongation and/or cell division. Preferentially cleaves at a distance of more than two disaccharide units from the ends of the glycan chain. In Salmonella paratyphi C (strain RKS4594), this protein is Endo-type membrane-bound lytic murein transglycosylase A.